Consider the following 205-residue polypeptide: Thymidylate kinase (205 aa).

Position 11 to 18 (11 to 18 (GLDKSGKT)) interacts with ATP.

Belongs to the thymidylate kinase family. Homodimer; the dimer arrangement is orthogonal and not antiparallel as in human enzyme.

It carries out the reaction dTMP + ATP = dTDP + ADP. The protein operates within pyrimidine metabolism; dTTP biosynthesis. In terms of biological role, poxvirus TMP kinase is able to phosphorylate dTMP, dUMP and also dGMP from any purine and pyrimidine nucleoside triphosphate. The large substrate specificity is explained by the presence of a canal connecting the edge of the dimer interface to the TMP base binding pocket, canal not found in the human homolog. In Homo sapiens (Human), this protein is Thymidylate kinase (OPG178).